We begin with the raw amino-acid sequence, 231 residues long: GFP-like fluorescent chromoprotein FP506 (231 aa).

The 5-imidazolinone (Asn-Gly) cross-link spans 66–68 (NYG). Tyr67 is modified (2,3-didehydrotyrosine).

The protein belongs to the GFP family. In terms of processing, contains a chromophore consisting of modified amino acid residues. The chromophore is formed by autocatalytic backbone condensation between Xaa-N and Gly-(N+2), and oxidation of Tyr-(N+1) to didehydrotyrosine. Maturation of the chromophore requires nothing other than molecular oxygen. The precise stereochemistry of the tyrosine has not been determined. In terms of tissue distribution, tentacle and oral disk.

Its function is as follows. Pigment protein that is yellow-green in color. This is GFP-like fluorescent chromoprotein FP506 from Zoanthus sp. (Green polyp).